Reading from the N-terminus, the 220-residue chain is Small ribosomal subunit protein uS3 (220 aa).

A KH type-2 domain is found at 39 to 107; the sequence is IREHVEGRLK…RVHINISEIK (69 aa).

It belongs to the universal ribosomal protein uS3 family. In terms of assembly, part of the 30S ribosomal subunit. Forms a tight complex with proteins S10 and S14.

In terms of biological role, binds the lower part of the 30S subunit head. Binds mRNA in the 70S ribosome, positioning it for translation. The chain is Small ribosomal subunit protein uS3 from Shouchella clausii (strain KSM-K16) (Alkalihalobacillus clausii).